Here is a 251-residue protein sequence, read N- to C-terminus: MAIISLAEMMESGVHFGHQTRRWNPRMAPYIYTARNGVHIIDLVKTAQCVETAYRWVRTNAEQGKRFLFVGTKRQAAGIIAEEATRCGSYYINQRWLGGMLTNWATIKGRVDRLKELERMGETGALALRPKKEAAVLRRELERLQKYLGGIKNMRRLPDAVVIIDQKREYNAVQECQKLGIPIVAMLDTNCDPDVVDVPIPGNDDAIRSVKLIVSKLADAIYEARHGAAPVAEEYDYDGAEDEYEDDADEA.

This sequence belongs to the universal ribosomal protein uS2 family.

The chain is Small ribosomal subunit protein uS2 from Synechococcus sp. (strain ATCC 27144 / PCC 6301 / SAUG 1402/1) (Anacystis nidulans).